The primary structure comprises 223 residues: Ribose-5-phosphate isomerase A (223 aa).

Substrate is bound by residues 32 to 35 (TGST), 83 to 86 (DGAD), and 96 to 99 (KGGG). Residue glutamate 105 is the Proton acceptor of the active site. Lysine 123 is a substrate binding site.

It belongs to the ribose 5-phosphate isomerase family. Homodimer.

The enzyme catalyses aldehydo-D-ribose 5-phosphate = D-ribulose 5-phosphate. It functions in the pathway carbohydrate degradation; pentose phosphate pathway; D-ribose 5-phosphate from D-ribulose 5-phosphate (non-oxidative stage): step 1/1. Its function is as follows. Catalyzes the reversible conversion of ribose-5-phosphate to ribulose 5-phosphate. The chain is Ribose-5-phosphate isomerase A from Acinetobacter baumannii (strain AYE).